Reading from the N-terminus, the 576-residue chain is (+)-alpha-terpineol synthase (576 aa).

(2E)-geranyl diphosphate is bound by residues Arg-286, Asp-323, Asp-327, Arg-466, and Asn-469. Residues Asp-323 and Asp-327 each contribute to the Mg(2+) site. A DDXXD motif motif is present at residues 323 to 327 (DDVYD). Asn-469, Thr-473, and Glu-477 together coordinate Mg(2+).

Belongs to the terpene synthase family. Tpsb subfamily. Requires Mg(2+) as cofactor. The cofactor is Mn(2+).

The catalysed reaction is (2E)-geranyl diphosphate + H2O = (R)-alpha-terpineol + diphosphate. Its function is as follows. Monoterpene synthase producing mainly (+)-alpha-terpineol (44%) and (-)-limonene (33.6%) and lower amounts of (E)-geraniol (5.9%), linalool (5.0%), myrcene (3.4%), (-)-alpha-pinene (3.3%), (+)-sabinene (3.0%) and alpha-terpinolene (1.6%). In Santalum album (White sandalwood), this protein is (+)-alpha-terpineol synthase.